Here is a 192-residue protein sequence, read N- to C-terminus: Xanthine phosphoribosyltransferase (192 aa).

Xanthine contacts are provided by Leu-20 and Asn-27. Residue 128 to 132 (ANGQA) participates in 5-phospho-alpha-D-ribose 1-diphosphate binding. Lys-156 contributes to the xanthine binding site.

The protein belongs to the purine/pyrimidine phosphoribosyltransferase family. Xpt subfamily. Homodimer.

It is found in the cytoplasm. It carries out the reaction XMP + diphosphate = xanthine + 5-phospho-alpha-D-ribose 1-diphosphate. The protein operates within purine metabolism; XMP biosynthesis via salvage pathway; XMP from xanthine: step 1/1. Converts the preformed base xanthine, a product of nucleic acid breakdown, to xanthosine 5'-monophosphate (XMP), so it can be reused for RNA or DNA synthesis. The sequence is that of Xanthine phosphoribosyltransferase from Lacticaseibacillus casei (strain BL23) (Lactobacillus casei).